A 316-amino-acid polypeptide reads, in one-letter code: Transaldolase 2 (316 aa).

Lys131 functions as the Schiff-base intermediate with substrate in the catalytic mechanism.

Belongs to the transaldolase family. Type 1 subfamily. Homodimer.

It is found in the cytoplasm. It catalyses the reaction D-sedoheptulose 7-phosphate + D-glyceraldehyde 3-phosphate = D-erythrose 4-phosphate + beta-D-fructose 6-phosphate. The protein operates within carbohydrate degradation; pentose phosphate pathway; D-glyceraldehyde 3-phosphate and beta-D-fructose 6-phosphate from D-ribose 5-phosphate and D-xylulose 5-phosphate (non-oxidative stage): step 2/3. In terms of biological role, transaldolase is important for the balance of metabolites in the pentose-phosphate pathway. The sequence is that of Transaldolase 2 from Salmonella paratyphi A (strain ATCC 9150 / SARB42).